A 315-amino-acid chain; its full sequence is MSQLDALREMTVVVADTGDIEAIKQYQPQDATTNPSLILSASALPQYASLIDDAVAYAKARSDDKAQQLIDAEDKLAVNIGLEILKIVPGRISTEVDARLSYDTKATIEKARQIMKLYNDAGISNDRILIKIASTWQGIRAAEVLEKEGINCNLTLLFSQAQARACAEAGVYLISPFVGRILDWYKAAEKKEYAPAEDPGVISVTNIYNYYKQYGYQTVVMGASFRNVGEITEIAGCDRLTIAPPLLKELAESNAPLVRKLEYKGEVKTRPAPLTEAEFYWQHNQDPMAIEKLAEGIRKFAVDIEKLEAMLAAKL.

Residue lysine 131 is the Schiff-base intermediate with substrate of the active site.

This sequence belongs to the transaldolase family. Type 1 subfamily. As to quaternary structure, homodimer.

The protein resides in the cytoplasm. The enzyme catalyses D-sedoheptulose 7-phosphate + D-glyceraldehyde 3-phosphate = D-erythrose 4-phosphate + beta-D-fructose 6-phosphate. It functions in the pathway carbohydrate degradation; pentose phosphate pathway; D-glyceraldehyde 3-phosphate and beta-D-fructose 6-phosphate from D-ribose 5-phosphate and D-xylulose 5-phosphate (non-oxidative stage): step 2/3. Transaldolase is important for the balance of metabolites in the pentose-phosphate pathway. The polypeptide is Transaldolase (Actinobacillus pleuropneumoniae serotype 7 (strain AP76)).